Reading from the N-terminus, the 677-residue chain is Methionine--tRNA ligase (677 aa).

Positions 15 to 25 (PYANGSIHLGH) match the 'HIGH' region motif. Residues Cys-146, Cys-149, Cys-159, and Cys-162 each coordinate Zn(2+). A 'KMSKS' region motif is present at residues 333 to 337 (KMSKS). ATP is bound at residue Lys-336. Residues 576 to 677 (DFAKIDLRVA…EGAKPGMRVK (102 aa)) enclose the tRNA-binding domain.

The protein belongs to the class-I aminoacyl-tRNA synthetase family. MetG type 1 subfamily. As to quaternary structure, homodimer. Zn(2+) serves as cofactor.

It localises to the cytoplasm. The enzyme catalyses tRNA(Met) + L-methionine + ATP = L-methionyl-tRNA(Met) + AMP + diphosphate. Is required not only for elongation of protein synthesis but also for the initiation of all mRNA translation through initiator tRNA(fMet) aminoacylation. This chain is Methionine--tRNA ligase, found in Aeromonas hydrophila subsp. hydrophila (strain ATCC 7966 / DSM 30187 / BCRC 13018 / CCUG 14551 / JCM 1027 / KCTC 2358 / NCIMB 9240 / NCTC 8049).